The primary structure comprises 131 residues: Monothiol glutaredoxin-S6 (131 aa).

One can recognise a Glutaredoxin domain in the interval 31 to 131; that stretch reads SAFVQNAIYS…KLLGNSQSQR (101 aa). Cysteine 51 is a binding site for [2Fe-2S] cluster.

This sequence belongs to the glutaredoxin family. CPYC subfamily.

The protein resides in the cytoplasm. Its function is as follows. May only reduce GSH-thiol disulfides, but not protein disulfides. The sequence is that of Monothiol glutaredoxin-S6 (GRXS6) from Oryza sativa subsp. japonica (Rice).